Reading from the N-terminus, the 125-residue chain is MVNSLTFTLVVVCLVRSCDGVAAVSSDMIDSTNNRISRNMIRRVLQETATANDDVKKLSTSTKVDSKLNQEIKTKPDQLVKAEKNSSKIGAWLKRMNVISSKRDKFFILATILLFPIAAYMVASR.

Residues 1-23 (MVNSLTFTLVVVCLVRSCDGVAA) form the signal peptide. The RxLR-dEER signature appears at 43 to 73 (RVLQETATANDDVKKLSTSTKVDSKLNQEIK). Asparagine 85 carries N-linked (GlcNAc...) asparagine glycosylation. Residues 106–123 (FFILATILLFPIAAYMVA) form a helical membrane-spanning segment.

It belongs to the RxLR effector family.

The protein resides in the secreted. The protein localises to the host endoplasmic reticulum membrane. Functionally, secreted effector that does not suppress pattern-triggered immunity (PTI) in plant host. This chain is Secreted RxLR effector protein RXLR-C13, found in Plasmopara halstedii (Downy mildew of sunflower).